Consider the following 568-residue polypeptide: Proline--tRNA ligase (568 aa).

The protein belongs to the class-II aminoacyl-tRNA synthetase family. ProS type 1 subfamily. Homodimer.

It localises to the cytoplasm. It catalyses the reaction tRNA(Pro) + L-proline + ATP = L-prolyl-tRNA(Pro) + AMP + diphosphate. Catalyzes the attachment of proline to tRNA(Pro) in a two-step reaction: proline is first activated by ATP to form Pro-AMP and then transferred to the acceptor end of tRNA(Pro). As ProRS can inadvertently accommodate and process non-cognate amino acids such as alanine and cysteine, to avoid such errors it has two additional distinct editing activities against alanine. One activity is designated as 'pretransfer' editing and involves the tRNA(Pro)-independent hydrolysis of activated Ala-AMP. The other activity is designated 'posttransfer' editing and involves deacylation of mischarged Ala-tRNA(Pro). The misacylated Cys-tRNA(Pro) is not edited by ProRS. The polypeptide is Proline--tRNA ligase (Listeria welshimeri serovar 6b (strain ATCC 35897 / DSM 20650 / CCUG 15529 / CIP 8149 / NCTC 11857 / SLCC 5334 / V8)).